A 319-amino-acid polypeptide reads, in one-letter code: Glutathione synthetase (319 aa).

Positions 127 to 311 (KIFVTEFADL…VASLLWDAIE (185 aa)) constitute an ATP-grasp domain. 153 to 209 (RNEMGDIILKPLYGNGGAGVFHSARDDRNFSSLLEMFGQMFREPYIAQEYLPDVRKG) is an ATP binding site. Residues E282 and N284 each coordinate Mg(2+).

Belongs to the prokaryotic GSH synthase family. Mg(2+) serves as cofactor. The cofactor is Mn(2+).

It catalyses the reaction gamma-L-glutamyl-L-cysteine + glycine + ATP = glutathione + ADP + phosphate + H(+). It participates in sulfur metabolism; glutathione biosynthesis; glutathione from L-cysteine and L-glutamate: step 2/2. In Agrobacterium fabrum (strain C58 / ATCC 33970) (Agrobacterium tumefaciens (strain C58)), this protein is Glutathione synthetase.